Here is a 198-residue protein sequence, read N- to C-terminus: MATMSALQSSFTSLSLSPSSSFLGQRLISPISLSVTSPVKPAENPCLVLAKLKRWERKECKPNSLPILHKMHVKFGDTVKVISGRDKGKIGEVTKIFTHNSTIVIKDVNLKTKHMKSREEGEPGQIVKIEAPIHSSNVMLYSKEKDVVSRVGHKVLEDGQKVRYLIKTGELIDTIEKWKLLKEAKDKETTQVAVTSAS.

The N-terminal 50 residues, 1–50 (MATMSALQSSFTSLSLSPSSSFLGQRLISPISLSVTSPVKPAENPCLVLA), are a transit peptide targeting the chloroplast.

The protein belongs to the universal ribosomal protein uL24 family. In terms of assembly, part of the 50S ribosomal subunit.

The protein resides in the plastid. Its subcellular location is the chloroplast. In terms of biological role, one of two assembly initiator proteins, it binds directly to the 5'-end of the 23S rRNA, where it nucleates assembly of the 50S subunit. Required for optimal plastid performance in terms of photosynthesis and growth. Required for the translation of plastid mRNAs. Plays a critical role in biosynthesis of thylakoid membrane proteins encoded by chloroplast genes. The sequence is that of Large ribosomal subunit protein uL24c (RPL24) from Arabidopsis thaliana (Mouse-ear cress).